The chain runs to 669 residues: Alpha-1,4-glucan:maltose-1-phosphate maltosyltransferase 2 (669 aa).

Alpha-maltose 1-phosphate-binding residues include Lys-255, Gln-315, and Asp-350. Asp-385 serves as the catalytic Nucleophile. Asn-386 is a binding site for alpha-maltose 1-phosphate. Residue Glu-414 is the Proton donor of the active site. Alpha-maltose 1-phosphate is bound at residue 525 to 526 (KY).

It belongs to the glycosyl hydrolase 13 family. GlgE subfamily. In terms of assembly, homodimer.

The enzyme catalyses alpha-maltose 1-phosphate + [(1-&gt;4)-alpha-D-glucosyl](n) = [(1-&gt;4)-alpha-D-glucosyl](n+2) + phosphate. Its function is as follows. Maltosyltransferase that uses maltose 1-phosphate (M1P) as the sugar donor to elongate linear or branched alpha-(1-&gt;4)-glucans. Maltooligosaccharides with a degree of polymerization (DP) superior or equal to 4 are efficient acceptors, with DP6 being optimal in the GlgE-catalyzed polymerization with M1P. Is probably involved in a branched alpha-glucan biosynthetic pathway from trehalose, together with TreS, Mak and GlgB. The protein is Alpha-1,4-glucan:maltose-1-phosphate maltosyltransferase 2 (glgE2) of Streptomyces coelicolor (strain ATCC BAA-471 / A3(2) / M145).